The sequence spans 435 residues: Adenylosuccinate synthetase (435 aa).

GTP-binding positions include 17–23 (GDEGKGK) and 45–47 (GHT). Asp18 acts as the Proton acceptor in catalysis. 2 residues coordinate Mg(2+): Asp18 and Gly45. Residues 18–21 (DEGK), 43–46 (NAGH), Thr134, Arg148, Gln229, Thr244, and Arg308 each bind IMP. His46 acts as the Proton donor in catalysis. A substrate-binding site is contributed by 304-310 (SVTGRPR). GTP is bound by residues Arg310, 336–338 (KLD), and 418–420 (STG).

This sequence belongs to the adenylosuccinate synthetase family. In terms of assembly, homodimer. Requires Mg(2+) as cofactor.

It localises to the cytoplasm. It carries out the reaction IMP + L-aspartate + GTP = N(6)-(1,2-dicarboxyethyl)-AMP + GDP + phosphate + 2 H(+). The protein operates within purine metabolism; AMP biosynthesis via de novo pathway; AMP from IMP: step 1/2. In terms of biological role, plays an important role in the de novo pathway of purine nucleotide biosynthesis. Catalyzes the first committed step in the biosynthesis of AMP from IMP. This is Adenylosuccinate synthetase from Bordetella parapertussis (strain 12822 / ATCC BAA-587 / NCTC 13253).